Reading from the N-terminus, the 1034-residue chain is Phosphoenolpyruvate carboxylase (1034 aa).

Residues His-203 and Lys-680 contribute to the active site.

It belongs to the PEPCase type 1 family. The cofactor is Mg(2+).

The enzyme catalyses oxaloacetate + phosphate = phosphoenolpyruvate + hydrogencarbonate. In terms of biological role, forms oxaloacetate, a four-carbon dicarboxylic acid source for the tricarboxylic acid cycle. The sequence is that of Phosphoenolpyruvate carboxylase (ppc) from Synechocystis sp. (strain ATCC 27184 / PCC 6803 / Kazusa).